The following is a 131-amino-acid chain: Small ribosomal subunit protein uS11 (131 aa).

It belongs to the universal ribosomal protein uS11 family. In terms of assembly, part of the 30S ribosomal subunit. Interacts with proteins S7 and S18. Binds to IF-3.

Functionally, located on the platform of the 30S subunit, it bridges several disparate RNA helices of the 16S rRNA. Forms part of the Shine-Dalgarno cleft in the 70S ribosome. This chain is Small ribosomal subunit protein uS11, found in Dictyoglomus turgidum (strain DSM 6724 / Z-1310).